The chain runs to 233 residues: Large ribosomal subunit protein uL1 (233 aa).

Belongs to the universal ribosomal protein uL1 family. Part of the 50S ribosomal subunit.

Binds directly to 23S rRNA. Forms the L1 stalk. Unlike the case in the Thermus thermophilus 70S ribosome, this protein is not seen to block the exit path of the E site tRNA. It is clear that the protein in the structure is flexible however, so this is probably due to its position in these crystals. Functionally, protein L1 is also a translational repressor protein, it controls the translation of the L11 operon by binding to its mRNA. The polypeptide is Large ribosomal subunit protein uL1 (rplA) (Deinococcus radiodurans (strain ATCC 13939 / DSM 20539 / JCM 16871 / CCUG 27074 / LMG 4051 / NBRC 15346 / NCIMB 9279 / VKM B-1422 / R1)).